The chain runs to 89 residues: Small ribosomal subunit protein bS20 (89 aa).

The tract at residues methionine 1–serine 28 is disordered.

It belongs to the bacterial ribosomal protein bS20 family.

In terms of biological role, binds directly to 16S ribosomal RNA. The sequence is that of Small ribosomal subunit protein bS20 from Haemophilus ducreyi (strain 35000HP / ATCC 700724).